The chain runs to 380 residues: L-lactate dehydrogenase (380 aa).

The 380-residue stretch at 1–380 (MIISSPNDYR…TRDSLVGLPR (380 aa)) folds into the FMN hydroxy acid dehydrogenase domain. Tyrosine 24 serves as a coordination point for substrate. Residues serine 106 and glutamine 127 each coordinate FMN. Tyrosine 129 lines the substrate pocket. Residue threonine 155 participates in FMN binding. Arginine 164 lines the substrate pocket. Residue lysine 251 coordinates FMN. Histidine 275 acts as the Proton acceptor in catalysis. Arginine 278 provides a ligand contact to substrate. FMN is bound at residue 306 to 330 (DSGIRTGLDVVRMLALGAKGVLLGR).

The protein belongs to the FMN-dependent alpha-hydroxy acid dehydrogenase family. The cofactor is FMN.

It localises to the cell inner membrane. The enzyme catalyses (S)-lactate + A = pyruvate + AH2. Functionally, catalyzes the conversion of L-lactate to pyruvate. Is coupled to the respiratory chain. The chain is L-lactate dehydrogenase from Azorhizobium caulinodans (strain ATCC 43989 / DSM 5975 / JCM 20966 / LMG 6465 / NBRC 14845 / NCIMB 13405 / ORS 571).